The primary structure comprises 204 residues: MQRFFHFLVWSLTSSATFVFIGILSFFGLNQSIFLSIVYGLASGAAVYIAGIWNARRLFLKKHELTGREYAYIKKNLEEARQKMVRLRKALFQAKSIQMFKQNAEMLRIVRRIYLLTKKEPKRFYQAERFFYQTLDSVVELTEKYAFLSSHPKKSKELSMSLSETRITLTELTKRLEEDLTQAMGDEIDELQFELDAAKHSLKK.

Functionally, in double copy it causes aberrant cell morphology, filamentation and inhibits sporulation. Hydrolyzes 5-bromo-4-chloroindolyl phosphate. In Bacillus subtilis (strain 168), this protein is Protein XpaC (xpaC).